Reading from the N-terminus, the 202-residue chain is Holliday junction resolvase RecU (202 aa).

Mg(2+) is bound by residues Thr-85, Asp-87, Glu-100, and Gln-119.

Belongs to the RecU family. Mg(2+) serves as cofactor.

The protein resides in the cytoplasm. It carries out the reaction Endonucleolytic cleavage at a junction such as a reciprocal single-stranded crossover between two homologous DNA duplexes (Holliday junction).. Functionally, endonuclease that resolves Holliday junction intermediates in genetic recombination. Cleaves mobile four-strand junctions by introducing symmetrical nicks in paired strands. Promotes annealing of linear ssDNA with homologous dsDNA. Required for DNA repair, homologous recombination and chromosome segregation. This chain is Holliday junction resolvase RecU, found in Streptococcus pyogenes serotype M6 (strain ATCC BAA-946 / MGAS10394).